The chain runs to 290 residues: Coiled-coil domain-containing protein 137 (290 aa).

Disordered stretches follow at residues 1–92 (MARP…EAQV), 98–117 (LEKEAKGEEPDIAVPKFKQR), 139–181 (LSKN…EARA), and 269–290 (RQEMTPAQPPGSSFQRQGHACL). The span at 20 to 39 (SGQPQGRRQQQAQGQQRSAS) shows a compositional bias: low complexity. Residues 56 to 79 (KNQDEQEIPFRLREIMRSRQEMKK) show a composition bias toward basic and acidic residues. A coiled-coil region spans residues 66–89 (RLREIMRSRQEMKKTLSNKKRKKE). Residues 154–163 (PKKEKSERKK) are compositionally biased toward basic and acidic residues. The stretch at 155-192 (KKEKSERKKAFQKRRLEKAQRKREARAVDRLEQELLKD) forms a coiled coil. A compositionally biased stretch (basic residues) spans 164–178 (AFQKRRLEKAQRKRE).

It localises to the chromosome. This Mus musculus (Mouse) protein is Coiled-coil domain-containing protein 137 (Ccdc137).